A 62-amino-acid polypeptide reads, in one-letter code: Photosystem II reaction center protein Z (62 aa).

2 helical membrane passes run 8–28 (SVFA…VVLA) and 41–61 (FSGA…NSLI).

This sequence belongs to the PsbZ family. As to quaternary structure, PSII is composed of 1 copy each of membrane proteins PsbA, PsbB, PsbC, PsbD, PsbE, PsbF, PsbH, PsbI, PsbJ, PsbK, PsbL, PsbM, PsbT, PsbY, PsbZ, Psb30/Ycf12, at least 3 peripheral proteins of the oxygen-evolving complex and a large number of cofactors. It forms dimeric complexes.

The protein localises to the plastid. Its subcellular location is the chloroplast thylakoid membrane. In terms of biological role, may control the interaction of photosystem II (PSII) cores with the light-harvesting antenna, regulates electron flow through the 2 photosystem reaction centers. PSII is a light-driven water plastoquinone oxidoreductase, using light energy to abstract electrons from H(2)O, generating a proton gradient subsequently used for ATP formation. The sequence is that of Photosystem II reaction center protein Z from Psilotum nudum (Whisk fern).